A 715-amino-acid polypeptide reads, in one-letter code: Probable ubiquitin thioesterase DG1039 (715 aa).

The stretch at lysine 86–asparagine 302 forms a coiled coil. The segment covering asparagine 287 to asparagine 302 has biased composition (basic and acidic residues). Disordered stretches follow at residues asparagine 287 to threonine 367, glutamine 398 to tyrosine 450, and leucine 502 to alanine 527. Over residues threonine 339–glutamine 349 the composition is skewed to polar residues. A compositionally biased stretch (low complexity) spans glutamine 398–glutamine 409. 2 stretches are compositionally biased toward polar residues: residues serine 410–asparagine 427 and leucine 502–serine 525. The 130-residue stretch at isoleucine 537–leucine 666 folds into the MPN domain. Residues histidine 615, histidine 617, aspartate 628, histidine 630, cysteine 672, histidine 678, and histidine 680 each contribute to the Zn(2+) site. A JAMM motif motif is present at residues histidine 615–aspartate 628.

The protein belongs to the peptidase M67C family. The cofactor is Zn(2+).

May be a zinc metalloprotease that specifically cleaves ubiquitin chains. This Dictyostelium discoideum (Social amoeba) protein is Probable ubiquitin thioesterase DG1039 (DG1039).